We begin with the raw amino-acid sequence, 66 residues long: ATP synthase F(0) complex subunit 8 (66 aa).

The chain crosses the membrane as a helical span at residues 8-24; that stretch reads IWLLAVVIVLTTLMIFL. The residue at position 54 (Lys-54) is an N6-acetyllysine; alternate. At Lys-54 the chain carries N6-succinyllysine; alternate. Lys-57 is subject to N6-acetyllysine.

It belongs to the ATPase protein 8 family. In terms of assembly, component of the ATP synthase complex composed at least of ATP5F1A/subunit alpha, ATP5F1B/subunit beta, ATP5MC1/subunit c (homooctomer), MT-ATP6/subunit a, MT-ATP8/subunit 8, ATP5ME/subunit e, ATP5MF/subunit f, ATP5MG/subunit g, ATP5MK/subunit k, ATP5MJ/subunit j, ATP5F1C/subunit gamma, ATP5F1D/subunit delta, ATP5F1E/subunit epsilon, ATP5PF/subunit F6, ATP5PB/subunit b, ATP5PD/subunit d, ATP5PO/subunit OSCP. ATP synthase complex consists of a soluble F(1) head domain (subunits alpha(3) and beta(3)) - the catalytic core - and a membrane F(0) domain - the membrane proton channel (subunits c, a, 8, e, f, g, k and j). These two domains are linked by a central stalk (subunits gamma, delta, and epsilon) rotating inside the F1 region and a stationary peripheral stalk (subunits F6, b, d, and OSCP). Interacts with PRICKLE3.

Its subcellular location is the mitochondrion membrane. In terms of biological role, subunit 8, of the mitochondrial membrane ATP synthase complex (F(1)F(0) ATP synthase or Complex V) that produces ATP from ADP in the presence of a proton gradient across the membrane which is generated by electron transport complexes of the respiratory chain. ATP synthase complex consist of a soluble F(1) head domain - the catalytic core - and a membrane F(1) domain - the membrane proton channel. These two domains are linked by a central stalk rotating inside the F(1) region and a stationary peripheral stalk. During catalysis, ATP synthesis in the catalytic domain of F(1) is coupled via a rotary mechanism of the central stalk subunits to proton translocation. In vivo, can only synthesize ATP although its ATP hydrolase activity can be activated artificially in vitro. Part of the complex F(0) domain. This chain is ATP synthase F(0) complex subunit 8, found in Mammuthus primigenius (Siberian woolly mammoth).